A 438-amino-acid chain; its full sequence is Na(+)/H(+) antiporter NhaA (438 aa).

Transmembrane regions (helical) follow at residues 23-43, 62-82, 104-124, 133-153, 162-182, 185-205, 221-241, 302-322, 337-357, 372-392, and 410-430; these read FGGIFLFLNAVLAMVVANSFL, FFIGFSLHNWIDDVLMALFFL, SFPVIAAIGGMIAPGLIYFFL, GFGIPMATDIAFALGVIMLLG, VFLITLAVADDLGAIVVIALF, TNLKFAWLLGALGVVLVLAVL, VLLWFCVHQSGIHATIAAVIL, FLAPISGYFIMPLFAFANAGV, LGVILGLCLGKPLGIFLITFI, WWHILGAGLLAGIGFTMSMFI, and IAILLGSLISGIIGALYLFAL.

This sequence belongs to the NhaA Na(+)/H(+) (TC 2.A.33) antiporter family.

It is found in the cell inner membrane. It catalyses the reaction Na(+)(in) + 2 H(+)(out) = Na(+)(out) + 2 H(+)(in). Functionally, na(+)/H(+) antiporter that extrudes sodium in exchange for external protons. The chain is Na(+)/H(+) antiporter NhaA from Helicobacter pylori (strain ATCC 700392 / 26695) (Campylobacter pylori).